We begin with the raw amino-acid sequence, 1092 residues long: Isoleucine--tRNA ligase (1092 aa).

The 'HIGH' region motif lies at 53–63 (PFANGLPHYGH). Residues 613 to 617 (KLSKR) carry the 'KMSKS' region motif. Lysine 616 is a binding site for ATP.

This sequence belongs to the class-I aminoacyl-tRNA synthetase family. IleS type 2 subfamily. In terms of assembly, monomer. Requires Zn(2+) as cofactor.

It is found in the cytoplasm. The catalysed reaction is tRNA(Ile) + L-isoleucine + ATP = L-isoleucyl-tRNA(Ile) + AMP + diphosphate. Catalyzes the attachment of isoleucine to tRNA(Ile). As IleRS can inadvertently accommodate and process structurally similar amino acids such as valine, to avoid such errors it has two additional distinct tRNA(Ile)-dependent editing activities. One activity is designated as 'pretransfer' editing and involves the hydrolysis of activated Val-AMP. The other activity is designated 'posttransfer' editing and involves deacylation of mischarged Val-tRNA(Ile). The chain is Isoleucine--tRNA ligase from Rickettsia peacockii (strain Rustic).